We begin with the raw amino-acid sequence, 562 residues long: Zinc finger protein 579 (562 aa).

Residues 1–11 (MDPQPPPPAQG) show a composition bias toward pro residues. The interval 1–43 (MDPQPPPPAQGSPPHRGRGRGRGRGRGRGRGRGRGGAGAPRAP) is disordered. The segment covering 15-33 (HRGRGRGRGRGRGRGRGRG) has biased composition (basic residues). 3 consecutive C2H2-type zinc fingers follow at residues 44–66 (LPCPTCGRLFRFPYYLSRHRLSH), 72–94 (HACPLCPKAFRRPAHLSRHLRGH), and 100–123 (LRCAACPRTFPEPAQLRRHLAQEH). R92 carries the omega-N-methylarginine modification. The tract at residues 139-203 (TAEPSWGPQD…SESEEAEAGA (65 aa)) is disordered. Residues S194 and S196 each carry the phosphoserine modification. 2 consecutive C2H2-type zinc fingers follow at residues 270 to 292 (HQCSICLKAFARPWSLSRHRLVH) and 298 to 320 (FVCPDCGLAFRLASYLRQHRRVH). Residues 327-379 (APLPAAGKKDDKASGARNSAKGPEGGEGAECGGASEGGEGQNGGDAAPARPPA) form a disordered region. The span at 349 to 369 (PEGGEGAECGGASEGGEGQNG) shows a compositional bias: gly residues. 3 C2H2-type zinc fingers span residues 384–406 (FWCPECGKGFRRRAHLRQHGVTH), 412–434 (FQCVRCQREFKRLADLARHAQVH), and 441–463 (HPCPRCPRRFSRAYSLLRHQRCH). Positions 477–562 (QAQAPTSPPP…HLRGLGGLAS (86 aa)) are disordered. Pro residues-rich tracts occupy residues 482-491 (TSPPPPPPPL) and 512-525 (PSPGTPPQSPPAPP). S483 bears the Phosphoserine mark.

It belongs to the krueppel C2H2-type zinc-finger protein family.

The protein resides in the nucleus. Its function is as follows. May be involved in transcriptional regulation. The sequence is that of Zinc finger protein 579 (ZNF579) from Homo sapiens (Human).